We begin with the raw amino-acid sequence, 309 residues long: Low-density lipoprotein receptor-related protein 1 (309 aa).

Belongs to the LDLR family.

It localises to the endoplasmic reticulum. It is found in the golgi apparatus. The protein resides in the endosome. Involved in endocytosis, fatty acid beta-oxidation and infectious growth. Plays a critical role in the accumulation of MSN2 from the cytosol to the nucleus by activating the cyclic AMP signaling pathway. MSN2 can then target the dienoyl-coenzyme A isomerase DCI1 and other genes involved in fatty acid beta-oxidation, which is important for lipid droplets degradation and infectious growth. The chain is Low-density lipoprotein receptor-related protein 1 from Pyricularia oryzae (strain 70-15 / ATCC MYA-4617 / FGSC 8958) (Rice blast fungus).